The sequence spans 253 residues: Indole-3-glycerol phosphate synthase (253 aa).

It belongs to the TrpC family.

It catalyses the reaction 1-(2-carboxyphenylamino)-1-deoxy-D-ribulose 5-phosphate + H(+) = (1S,2R)-1-C-(indol-3-yl)glycerol 3-phosphate + CO2 + H2O. It functions in the pathway amino-acid biosynthesis; L-tryptophan biosynthesis; L-tryptophan from chorismate: step 4/5. The polypeptide is Indole-3-glycerol phosphate synthase (Bacillus cereus (strain ATCC 10987 / NRS 248)).